Reading from the N-terminus, the 397-residue chain is Dual specificity mitogen-activated protein kinase kinase 4 (397 aa).

A disordered region spans residues 1 to 38 (MAAPSPSGGGGSGGGGGTPGPIGPPASGHPAVSSMQGK). Alanine 2 is subject to N-acetylalanine. Residues 7-20 (SGGGGSGGGGGTPG) are compositionally biased toward gly residues. The d domain stretch occupies residues 35 to 50 (MQGKRKALKLNFANPP). Arginine 56 bears the Asymmetric dimethylarginine; alternate mark. Arginine 56 carries the omega-N-methylarginine; alternate modification. Phosphoserine is present on serine 88. A Protein kinase domain is found at 100 to 366 (LKDLGEIGRG…KELLKHPFIL (267 aa)). ATP is bound by residues 106-114 (IGRGAYGSV) and lysine 129. Catalysis depends on aspartate 227, which acts as the Proton acceptor. At serine 255 the chain carries Phosphoserine. A Phosphothreonine modification is found at threonine 259. Residues 362–385 (HPFILMYEERTVEVACYVCKILDQ) are DVD domain.

It belongs to the protein kinase superfamily. STE Ser/Thr protein kinase family. MAP kinase kinase subfamily. As to quaternary structure, interacts with SPAG9. Interacts (via its D domain) with its substrates MAPK8/JNK1, MAPK9/JNK2, MAPK10/JNK3, MAPK11 and MAPK14. Interacts (via its DVD domain) with MAP3Ks activators like MAP3K1/MEKK1 and MAP3K11/MLK3. Interacts with ARRB1, ARRB2 and MAPK8IP3/JIP3. Activated by phosphorylation on Ser-255 and Thr-259 by MAP kinase kinase kinases (MAP3Ks). In terms of tissue distribution, strong expression is detected in most of the central nervous system and in liver and thymus during early stages of development. While expression in nervous system increases over time, expression in fetal liver and thymus gradually decreases as embryogenesis proceeds. High level of expression in the central nervous system persists throughout postnatal development and remained at a stable level in adult brain.

It localises to the cytoplasm. The protein localises to the nucleus. The enzyme catalyses L-seryl-[protein] + ATP = O-phospho-L-seryl-[protein] + ADP + H(+). It catalyses the reaction L-threonyl-[protein] + ATP = O-phospho-L-threonyl-[protein] + ADP + H(+). The catalysed reaction is L-tyrosyl-[protein] + ATP = O-phospho-L-tyrosyl-[protein] + ADP + H(+). With respect to regulation, activated in response to a variety of cellular stresses, including UV and gamma-irradiation, heat shock, hyperosmolarity, T-cell receptor stimulation, peroxide and inflammatory cytokines. Also activated by developmental cues. MAP2K4/MKK4 is activated by the majority of MKKKs, such as MAP3K5/ASK1, MAP3K1/MEKK1, MAP3K7/TAK1, MAP3K10/MLK2, MAP3K11/MLK3, MAP3K12/DLK and MAP3K13/LZK. Its function is as follows. Dual specificity protein kinase which acts as an essential component of the MAP kinase signal transduction pathway. Essential component of the stress-activated protein kinase/c-Jun N-terminal kinase (SAP/JNK) signaling pathway. With MAP2K7/MKK7, is the one of the only known kinase to directly activate the stress-activated protein kinase/c-Jun N-terminal kinases MAPK8/JNK1, MAPK9/JNK2 and MAPK10/JNK3. MAP2K4/MKK4 and MAP2K7/MKK7 both activate the JNKs by phosphorylation, but they differ in their preference for the phosphorylation site in the Thr-Pro-Tyr motif. MAP2K4 shows preference for phosphorylation of the Tyr residue and MAP2K7/MKK7 for the Thr residue. The phosphorylation of the Thr residue by MAP2K7/MKK7 seems to be the prerequisite for JNK activation at least in response to pro-inflammatory cytokines, while other stimuli activate both MAP2K4/MKK4 and MAP2K7/MKK7 which synergistically phosphorylate JNKs. MAP2K4 is required for maintaining peripheral lymphoid homeostasis. The MKK/JNK signaling pathway is also involved in mitochondrial death signaling pathway, including the release cytochrome c, leading to apoptosis. Whereas MAP2K7/MKK7 exclusively activates JNKs, MAP2K4/MKK4 additionally activates the p38 MAPKs MAPK11, MAPK12, MAPK13 and MAPK14. This chain is Dual specificity mitogen-activated protein kinase kinase 4 (Map2k4), found in Mus musculus (Mouse).